The primary structure comprises 273 residues: 4-hydroxy-tetrahydrodipicolinate reductase (273 aa).

NAD(+) is bound by residues 12–17 (GAGGRM) and Glu38. Arg39 serves as a coordination point for NADP(+). NAD(+)-binding positions include 102-104 (GTT) and 126-129 (AANF). His159 functions as the Proton donor/acceptor in the catalytic mechanism. Residue His160 participates in (S)-2,3,4,5-tetrahydrodipicolinate binding. Lys163 functions as the Proton donor in the catalytic mechanism. (S)-2,3,4,5-tetrahydrodipicolinate is bound at residue 169–170 (GT).

It belongs to the DapB family. As to quaternary structure, homotetramer.

It is found in the cytoplasm. The catalysed reaction is (S)-2,3,4,5-tetrahydrodipicolinate + NAD(+) + H2O = (2S,4S)-4-hydroxy-2,3,4,5-tetrahydrodipicolinate + NADH + H(+). It carries out the reaction (S)-2,3,4,5-tetrahydrodipicolinate + NADP(+) + H2O = (2S,4S)-4-hydroxy-2,3,4,5-tetrahydrodipicolinate + NADPH + H(+). It functions in the pathway amino-acid biosynthesis; L-lysine biosynthesis via DAP pathway; (S)-tetrahydrodipicolinate from L-aspartate: step 4/4. Catalyzes the conversion of 4-hydroxy-tetrahydrodipicolinate (HTPA) to tetrahydrodipicolinate. This Escherichia coli O157:H7 protein is 4-hydroxy-tetrahydrodipicolinate reductase.